Reading from the N-terminus, the 236-residue chain is Eukaryotic translation initiation factor 3 subunit J (236 aa).

A disordered region spans residues alanine 20 to leucine 88. Residues glycine 28–lysine 46 are compositionally biased toward acidic residues. Basic and acidic residues-rich tracts occupy residues aspartate 47–valine 58 and alanine 68–leucine 88.

The protein belongs to the eIF-3 subunit J family. As to quaternary structure, component of the eukaryotic translation initiation factor 3 (eIF-3) complex. The eIF-3 complex interacts with pix.

Its subcellular location is the cytoplasm. Its function is as follows. Component of the eukaryotic translation initiation factor 3 (eIF-3) complex, which is involved in protein synthesis of a specialized repertoire of mRNAs and, together with other initiation factors, stimulates binding of mRNA and methionyl-tRNAi to the 40S ribosome. The eIF-3 complex specifically targets and initiates translation of a subset of mRNAs involved in cell proliferation. This chain is Eukaryotic translation initiation factor 3 subunit J, found in Drosophila willistoni (Fruit fly).